The following is a 66-amino-acid chain: Regulator of G-protein signaling 11 (66 aa).

The region spanning 1–66 (EACEELRFGG…DAAQLHIYML (66 aa)) is the RGS domain.

Heterodimer with Gbeta5. Interacts with RGS7BP, leading to regulate the subcellular location of the heterodimer formed with Gbeta5.

In terms of biological role, inhibits signal transduction by increasing the GTPase activity of G protein alpha subunits thereby driving them into their inactive GDP-bound form. The chain is Regulator of G-protein signaling 11 (Rgs11) from Rattus norvegicus (Rat).